The chain runs to 593 residues: Inactive metallocarboxypeptidase ECM14 (593 aa).

The N-terminal stretch at 1–22 (MHVTVQLSLLLSLASSLPLVSA) is a signal peptide. A propeptide spanning residues 23–175 (IPQHDGQAYT…QAIYESYPKN (153 aa)) is cleaved from the precursor. Disordered stretches follow at residues 75 to 98 (VPQRGKDSETKTGKQSEAASKAPA) and 172 to 202 (YPKNNPSSPSHPGATTRRFSPSASTPESQPH). Residues 78 to 88 (RGKDSETKTGK) show a composition bias toward basic and acidic residues. The segment covering 188–199 (RRFSPSASTPES) has biased composition (polar residues). The region spanning 211–537 (DYQPLSVLLP…HAVVAMGKFL (327 aa)) is the Peptidase M14 domain. Zn(2+) contacts are provided by His276 and Glu279. Substrate contacts are provided by residues 276-279 (HARE), Arg334, and 351-352 (DR). Cys345 and Cys368 are disulfide-bonded. N-linked (GlcNAc...) asparagine glycosylation is present at Asn361. His408 lines the Zn(2+) pocket. A substrate-binding site is contributed by 409-410 (SY). The tract at residues 548 to 593 (DEPHAGEQTQDNSYDEDGDNLFRAQGGDPQVRFTRRNIGAHDDDSE) is disordered.

The protein belongs to the peptidase M14 family. Zn(2+) serves as cofactor.

It is found in the vacuole. The protein localises to the secreted. Inactive carboxypeptidase that may play a role in cell wall organization and biogenesis. This Arthroderma otae (strain ATCC MYA-4605 / CBS 113480) (Microsporum canis) protein is Inactive metallocarboxypeptidase ECM14 (ECM14).